The primary structure comprises 163 residues: 3-isopropylmalate dehydratase small subunit (163 aa).

The protein belongs to the LeuD family. LeuD type 2 subfamily. In terms of assembly, heterodimer of LeuC and LeuD.

It catalyses the reaction (2R,3S)-3-isopropylmalate = (2S)-2-isopropylmalate. It functions in the pathway amino-acid biosynthesis; L-leucine biosynthesis; L-leucine from 3-methyl-2-oxobutanoate: step 2/4. Its function is as follows. Catalyzes the isomerization between 2-isopropylmalate and 3-isopropylmalate, via the formation of 2-isopropylmaleate. The chain is 3-isopropylmalate dehydratase small subunit from Clostridioides difficile (strain 630) (Peptoclostridium difficile).